A 254-amino-acid chain; its full sequence is Very-long-chain (3R)-3-hydroxyacyl-CoA dehydratase 2 (254 aa).

A compositionally biased stretch (low complexity) spans 1–10; that stretch reads MAAAAATAAT. Residues 1–34 are disordered; the sequence is MAAAAATAATKGNGGGSGRVGAGDSSGARKKKGP. A2 is modified (N-acetylalanine). The Cytoplasmic portion of the chain corresponds to 2–41; that stretch reads AAAAATAATKGNGGGSGRVGAGDSSGARKKKGPGPVATAY. Over residues 12 to 21 the composition is skewed to gly residues; the sequence is GNGGGSGRVG. A helical membrane pass occupies residues 42-60; it reads LVIYNVVMTAGWLVIAVGL. Residues 61–79 lie on the Lumenal side of the membrane; it reads VRAYLAKGSYHSLYYSIER. Residues 80–97 form a helical membrane-spanning segment; the sequence is PLKFFQTGALLEILHCAI. At 98 to 107 the chain is on the cytoplasmic side; sequence GIVPSSVVLT. A helical membrane pass occupies residues 108-125; sequence SFQVMSRVFLIWAVTHSV. At 126–130 the chain is on the lumenal side; the sequence is KEVQS. A helical membrane pass occupies residues 131 to 146; sequence EDSVLLFVIAWTITEI. Residues 147–169 lie on the Cytoplasmic side of the membrane; it reads IRYSFYTFSLLNHLPYIIKWARY. A helical membrane pass occupies residues 170-187; it reads TLFIVLYPMGVTGELLTI. Residues Y176 and E183 contribute to the active site. Residues 188–217 lie on the Lumenal side of the membrane; that stretch reads YAALPFVRQAGLYSISLPNKYNFSFDYHAF. The tract at residues 198 to 214 is may be involved in interaction with TECR; the sequence is GLYSISLPNKYNFSFDY. N209 carries an N-linked (GlcNAc...) asparagine glycan. Residues 218–235 traverse the membrane as a helical segment; sequence LILIMISYIPLFPQLYFH. Residues 236-254 lie on the Cytoplasmic side of the membrane; it reads MIHQRRKVLSHTEEHKKFE.

It belongs to the very long-chain fatty acids dehydratase HACD family. As to quaternary structure, may interact with enzymes of the ELO family (including ELOVL1); with those enzymes that mediate condensation, the first of the four steps of the reaction cycle responsible for fatty acids elongation, may be part of a larger fatty acids elongase complex. Interacts with BCAP31. Interacts with TECR.

The protein localises to the endoplasmic reticulum membrane. It catalyses the reaction a very-long-chain (3R)-3-hydroxyacyl-CoA = a very-long-chain (2E)-enoyl-CoA + H2O. The catalysed reaction is (3R)-hydroxyhexadecanoyl-CoA = (2E)-hexadecenoyl-CoA + H2O. It carries out the reaction (3R)-hydroxyoctadecanoyl-CoA = (2E)-octadecenoyl-CoA + H2O. The enzyme catalyses (3R)-hydroxyeicosanoyl-CoA = (2E)-eicosenoyl-CoA + H2O. It catalyses the reaction (3R)-hydroxydocosanoyl-CoA = (2E)-docosenoyl-CoA + H2O. The catalysed reaction is (3R)-hydroxytetracosanoyl-CoA = (2E)-tetracosenoyl-CoA + H2O. It carries out the reaction (3R)-hydroxyhexacosanoyl-CoA = (2E)-hexacosenoyl-CoA + H2O. The protein operates within lipid metabolism; fatty acid biosynthesis. Catalyzes the third of the very long-chain fatty acids (VLCFA) elongation four-step cycle (condensation, reduction, dehydration, and reduction). This endoplasmic reticulum-elongation process is characterized by the addition of two carbons to the lipid chain through each cycle. This enzyme catalyzes the dehydration of the 3-hydroxyacyl-CoA intermediate into trans-2,3-enoyl-CoA, within each cycle of elongation. Therefore, it participates in the production of various VLCFAs involved in multiple biological processes as precursors of membrane lipids and lipid mediators. This Mus musculus (Mouse) protein is Very-long-chain (3R)-3-hydroxyacyl-CoA dehydratase 2.